A 123-amino-acid chain; its full sequence is Cliotide T12 (123 aa).

The N-terminal stretch at 1 to 28 is a signal peptide; that stretch reads MASLRIAPLALFFFLAASVMFTVEKTEA. The segment at residues 29 to 58 is a cross-link (cyclopeptide (Gly-Asp)); that stretch reads GIPCGESCVFIPCITGAIGCSCKSKVCYRD. Cystine bridges form between cysteine 32–cysteine 48, cysteine 36–cysteine 50, and cysteine 41–cysteine 55. Positions 59-123 are cleaved as a propeptide — removed in mature form; the sequence is HVIAAEAKTM…KDHLKMSVPN (65 aa).

Contains 3 disulfide bonds. In terms of processing, this is a cyclic peptide.

In terms of biological role, probably participates in a plant defense mechanism. The protein is Cliotide T12 of Clitoria ternatea (Butterfly pea).